A 126-amino-acid polypeptide reads, in one-letter code: Cystatin-like cysteine protease inhibitor EPIC1 (126 aa).

The N-terminal stretch at 1-21 (MTFLRPILALLAATALVTTSA) is a signal peptide. Asparagine 46 carries an N-linked (GlcNAc...) asparagine glycan. Positions 69-73 (QVVSG) match the Secondary area of contact motif.

The protein belongs to the cystatin family. In terms of assembly, interacts with the host papain-like cysteine protease RCR3. Interacts with the host papain-like cysteine protease C14.

It localises to the secreted. In terms of biological role, secreted effector that interacts with and inhibits the pathogenesis-related papain-like cysteine proteases C14 and RCR3 of host plants. Inhibition of host proteases by a pathogen extracellular protease inhibitor forms a specific type of defense-counterdefense mechanism between plants and microbial pathogens. This Phytophthora infestans (Potato late blight agent) protein is Cystatin-like cysteine protease inhibitor EPIC1.